The primary structure comprises 717 residues: Ubinuclein-2 (717 aa).

Disordered regions lie at residues 114–136 (KDGS…TEDS), 166–308 (LERI…SAKS), and 620–717 (ADSS…NLPS). A compositionally biased stretch (acidic residues) spans 118-136 (DGEELDGAPDDDDYDTEDS). Polar residues-rich tracts occupy residues 214–246 (QSAS…NGND) and 285–308 (SSKS…SAKS). A compositionally biased stretch (basic and acidic residues) spans 623 to 632 (SFERSKQQHE). Positions 634-641 (LKRTSSLS) match the Nuclear localization signal motif. Positions 653-665 (KTEPALEETHLPA) are enriched in basic and acidic residues. Residues 675–705 (RQTHLKSKTHKQVQVHPQSKAHKQAQVHPKA) show a composition bias toward basic residues. The segment covering 706–717 (KTQTPPDLNLPS) has biased composition (polar residues).

Belongs to the ubinuclein family. In terms of assembly, component of the HIRA complex made of UBN1, UBN2, ASF1A, CABIN1 and HIRA. Interacts with HIRA.

The protein resides in the nucleus. The protein localises to the nucleolus. In terms of biological role, may be required for replication-independent chromatin assembly. The sequence is that of Ubinuclein-2 from Arabidopsis thaliana (Mouse-ear cress).